A 1025-amino-acid chain; its full sequence is Beta-galactosidase (1025 aa).

The Proton donor role is filled by Glu-482. Catalysis depends on Glu-551, which acts as the Nucleophile.

Belongs to the glycosyl hydrolase 2 family.

The catalysed reaction is Hydrolysis of terminal non-reducing beta-D-galactose residues in beta-D-galactosides.. The sequence is that of Beta-galactosidase (LAC4) from Kluyveromyces lactis (strain ATCC 8585 / CBS 2359 / DSM 70799 / NBRC 1267 / NRRL Y-1140 / WM37) (Yeast).